The sequence spans 492 residues: N-succinylglutamate 5-semialdehyde dehydrogenase (492 aa).

220-225 is an NAD(+) binding site; the sequence is GSANTG. Active-site residues include Glu-243 and Cys-277.

The protein belongs to the aldehyde dehydrogenase family. AstD subfamily.

The enzyme catalyses N-succinyl-L-glutamate 5-semialdehyde + NAD(+) + H2O = N-succinyl-L-glutamate + NADH + 2 H(+). The protein operates within amino-acid degradation; L-arginine degradation via AST pathway; L-glutamate and succinate from L-arginine: step 4/5. Its function is as follows. Catalyzes the NAD-dependent reduction of succinylglutamate semialdehyde into succinylglutamate. The chain is N-succinylglutamate 5-semialdehyde dehydrogenase from Escherichia coli (strain 55989 / EAEC).